The primary structure comprises 117 residues: Early E3 13.3 kDa protein (117 aa).

This is Early E3 13.3 kDa protein from Canine adenovirus serotype 1 (strain Glaxo) (CAdV-1).